Here is a 975-residue protein sequence, read N- to C-terminus: Probable ATP-dependent RNA helicase CG8611 (975 aa).

The span at 1–24 shows a compositional bias: polar residues; it reads MVENISLNVTVKSSARKNQQQSPA. Disordered stretches follow at residues 1 to 38, 50 to 104, and 127 to 295; these read MVEN…QDFD, AIVV…DDLM, and TTKP…FRTK. Residues 64-94 are compositionally biased toward low complexity; it reads PTNSSVPNTTKSPTPSVSSSKSAISTLSASP. Phosphoserine is present on residues serine 75 and serine 99. Over residues 190–203 the composition is skewed to basic and acidic residues; that stretch reads QLEEERRQKRREEG. Phosphoserine occurs at positions 210, 220, and 224. Residues 242 to 261 show a composition bias toward acidic residues; sequence IEDSGESGEESATSDEEPDE. The span at 269–285 shows a compositional bias: basic and acidic residues; the sequence is QEKEPKQTAKKPPKAEE. Positions 327–356 match the Q motif motif; the sequence is SKISTLGLHPHAVKNLEDLLSIRELTSVQQ. The 190-residue stretch at 359–548 folds into the Helicase ATP-binding domain; the sequence is IPEVLQGKDV…GLTLKNPLYI (190 aa). 372 to 379 is an ATP binding site; sequence SQTGSGKT. The short motif at 485 to 488 is the DEAD box element; sequence DEAD. One can recognise a Helicase C-terminal domain in the interval 616–789; the sequence is LLAKEVDASP…DMYAYLQTLL (174 aa). Serine 667 is modified (phosphoserine). 2 disordered regions span residues 915 to 942 and 955 to 975; these read LQQR…VGRS and NMSE…RKQA.

Belongs to the DEAD box helicase family. DDX31/DBP7 subfamily.

It catalyses the reaction ATP + H2O = ADP + phosphate + H(+). Probable ATP-dependent RNA helicase. The sequence is that of Probable ATP-dependent RNA helicase CG8611 from Drosophila melanogaster (Fruit fly).